Reading from the N-terminus, the 158-residue chain is Large ribosomal subunit protein uL15 (158 aa).

Over residues 1 to 13 (MKLNEIKDNEGST) the composition is skewed to basic and acidic residues. The disordered stretch occupies residues 1–44 (MKLNEIKDNEGSTHSRKRLGRGIGSGSGKTAGRGVKGQKSRSGV). The span at 21-35 (RGIGSGSGKTAGRGV) shows a compositional bias: gly residues.

It belongs to the universal ribosomal protein uL15 family. Part of the 50S ribosomal subunit.

Binds to the 23S rRNA. This is Large ribosomal subunit protein uL15 from Rhizobium etli (strain ATCC 51251 / DSM 11541 / JCM 21823 / NBRC 15573 / CFN 42).